The sequence spans 440 residues: UDP-N-acetylmuramoylalanine--D-glutamate ligase (440 aa).

ATP is bound at residue 128 to 134 (GTNGKTT).

Belongs to the MurCDEF family.

The protein localises to the cytoplasm. The catalysed reaction is UDP-N-acetyl-alpha-D-muramoyl-L-alanine + D-glutamate + ATP = UDP-N-acetyl-alpha-D-muramoyl-L-alanyl-D-glutamate + ADP + phosphate + H(+). It participates in cell wall biogenesis; peptidoglycan biosynthesis. Functionally, cell wall formation. Catalyzes the addition of glutamate to the nucleotide precursor UDP-N-acetylmuramoyl-L-alanine (UMA). The sequence is that of UDP-N-acetylmuramoylalanine--D-glutamate ligase from Lawsonia intracellularis (strain PHE/MN1-00).